The following is a 146-amino-acid chain: Large ribosomal subunit protein bL9 (146 aa).

Belongs to the bacterial ribosomal protein bL9 family. As to quaternary structure, part of the 50S ribosomal subunit. Contacts protein L31.

Binds to the 23S rRNA and protein L31. The polypeptide is Large ribosomal subunit protein bL9 (rplI) (Deinococcus radiodurans (strain ATCC 13939 / DSM 20539 / JCM 16871 / CCUG 27074 / LMG 4051 / NBRC 15346 / NCIMB 9279 / VKM B-1422 / R1)).